The chain runs to 394 residues: Phosphopentomutase (394 aa).

Asp13, Asp286, His291, Asp327, His328, and His339 together coordinate Mn(2+).

It belongs to the phosphopentomutase family. Requires Mn(2+) as cofactor.

It localises to the cytoplasm. The catalysed reaction is 2-deoxy-alpha-D-ribose 1-phosphate = 2-deoxy-D-ribose 5-phosphate. It carries out the reaction alpha-D-ribose 1-phosphate = D-ribose 5-phosphate. Its pathway is carbohydrate degradation; 2-deoxy-D-ribose 1-phosphate degradation; D-glyceraldehyde 3-phosphate and acetaldehyde from 2-deoxy-alpha-D-ribose 1-phosphate: step 1/2. Its function is as follows. Isomerase that catalyzes the conversion of deoxy-ribose 1-phosphate (dRib-1-P) and ribose 1-phosphate (Rib-1-P) to deoxy-ribose 5-phosphate (dRib-5-P) and ribose 5-phosphate (Rib-5-P), respectively. The sequence is that of Phosphopentomutase from Bacillus thuringiensis (strain Al Hakam).